Reading from the N-terminus, the 3354-residue chain is Cadherin-23 (3354 aa).

An N-terminal signal peptide occupies residues 1-23; the sequence is MRYSLVTCYAVLWLLMLVPGSWG. The Extracellular portion of the chain corresponds to 24-3064; the sequence is QVNRLPFFTN…SVQLPDDMSA (3041 aa). Cadherin domains are found at residues 34–132, 133–236, 237–348, 349–460, 461–561, 562–671, 672–784, 779–890, 891–995, 996–1102, 1103–1208, 1210–1313, 1314–1418, 1420–1527, 1529–1634, 1635–1744, 1745–1851, 1852–1959, 1960–2069, 2070–2174, 2175–2293, 2297–2402, 2403–2509, 2510–2611, 2614–2722, 2729–2846, and 2847–2975; these read HFFD…APTF, HNQP…DPIF, INLP…APEF, NSSE…RPIF, SQPL…VPTF, QKDA…PPTF, SKPA…APYY, KDAP…DPTF, RNLP…TPTF, FPAV…RPIF, LQSS…APVF, QQQY…AVQF, SNAS…SPRF, FTSD…PPVI, SPFG…APVF, QQPH…VPTF, PRDY…DPVL, LNLP…HPLF, TEGT…WPTF, SPPT…RPEF, LNPI…TPQF, GITY…NPIF, DQPS…RPQF, SKPQ…RPVF, PPNG…EPLF, SPQY…PPRF, and TKAE…EEEF. Residues N155 and N206 are each glycosylated (N-linked (GlcNAc...) asparagine). N349, N393, N434, N466, N472, N602, N694, N765, N810, N827, N941, N1001, N1018, N1171, N1282, N1315, N1473, N1534, N1651, N1667, N1818, N1857, N1889, N1902, N2014, N2050, N2129, N2168, N2195, N2263, N2357, and N2369 each carry an N-linked (GlcNAc...) asparagine glycan. N-linked (GlcNAc...) asparagine glycans are attached at residues N2578, N2616, N2749, N2808, N2877, N2896, N2941, and N2981. A helical transmembrane segment spans residues 3065–3085; sequence LQMAIIVLAILLFLAAMLFVL. The Cytoplasmic portion of the chain corresponds to 3086–3354; it reads MNWYYRTIHK…MESPLEITEL (269 aa).

In terms of assembly, interacts with USH1C and USH1G. antiparallel heterodimer with PCDH15. Isoform C1: Interacts with CAMSAP3; leading to inhibit CAMSAP3 ability to induce microtubule bundle formation. In adult animals relatively high levels of expression are found in testis, skeletal muscle, heart, eye and thymus, and lower expression in kidney, lung and brain. Found in the sensory hair cells of the inner ear.

The protein resides in the cell membrane. In terms of biological role, cadherins are calcium-dependent cell adhesion proteins. They preferentially interact with themselves in a homophilic manner in connecting cells. CDH23 is required for establishing and/or maintaining the proper organization of the stereocilia bundle of hair cells in the cochlea and the vestibule during late embryonic/early postnatal development. It is part of the functional network formed by USH1C, USH1G, CDH23 and MYO7A that mediates mechanotransduction in cochlear hair cells. Required for normal hearing. In Mus musculus (Mouse), this protein is Cadherin-23 (Cdh23).